A 163-amino-acid chain; its full sequence is Protein EARLY RESPONSIVE TO DEHYDRATION 15 (163 aa).

The PAM2-like signature appears at 10–20 (TLNPDAPLFIP). A disordered region spans residues 118–163 (NGEMVKKSSGNRSPRSIVEPAKYAEKPAKWGNQRVAAAPRNIHQPR).

As to quaternary structure, interacts with PAB2, PAB4 and PAB8. Interacts with MPC. In terms of tissue distribution, expressed in cauline leaves, stems, rosette leaves, immature siliques and primary inflorescences.

Its subcellular location is the cytoplasm. In terms of biological role, central component of stress responses that interacts with poly(A)-binding proteins. Negative regulator of abscisic acid (ABA) responses, including resistance to drought and freezing as well as stomatal closure regulation. Mediates resistance to the bacterial necrotroph pathogen Erwinia carotovora subsp. carotovora and promotes the induction of marker genes for systemic acquired resistance (SAR). This Arabidopsis thaliana (Mouse-ear cress) protein is Protein EARLY RESPONSIVE TO DEHYDRATION 15 (ERD15).